The following is a 363-amino-acid chain: Phosphoserine aminotransferase (363 aa).

L-glutamate is bound at residue R42. Pyridoxal 5'-phosphate is bound by residues 76–77 (GR), W102, T156, D175, and Q198. An N6-(pyridoxal phosphate)lysine modification is found at K199. 240-241 (NT) contacts pyridoxal 5'-phosphate.

It belongs to the class-V pyridoxal-phosphate-dependent aminotransferase family. SerC subfamily. In terms of assembly, homodimer. Pyridoxal 5'-phosphate is required as a cofactor.

The protein localises to the cytoplasm. It catalyses the reaction O-phospho-L-serine + 2-oxoglutarate = 3-phosphooxypyruvate + L-glutamate. The enzyme catalyses 4-(phosphooxy)-L-threonine + 2-oxoglutarate = (R)-3-hydroxy-2-oxo-4-phosphooxybutanoate + L-glutamate. It participates in amino-acid biosynthesis; L-serine biosynthesis; L-serine from 3-phospho-D-glycerate: step 2/3. The protein operates within cofactor biosynthesis; pyridoxine 5'-phosphate biosynthesis; pyridoxine 5'-phosphate from D-erythrose 4-phosphate: step 3/5. Catalyzes the reversible conversion of 3-phosphohydroxypyruvate to phosphoserine and of 3-hydroxy-2-oxo-4-phosphonooxybutanoate to phosphohydroxythreonine. This is Phosphoserine aminotransferase from Shewanella sp. (strain W3-18-1).